The chain runs to 435 residues: Tyrosine-protein phosphatase non-receptor type 1 (435 aa).

Met1 is subject to N-acetylmethionine. In terms of domain architecture, Tyrosine-protein phosphatase spans 3 to 277; sequence MEKEFEQIDK…RFSYLAVIEG (275 aa). Tyr20 carries the post-translational modification Phosphotyrosine. Ser50 is modified (phosphoserine; by PKB/AKT1, CLK1 and CLK2). At Tyr66 the chain carries Phosphotyrosine; by EGFR. Substrate contacts are provided by residues Asp181 and 215-221; that span reads CSAGIGR. Catalysis depends on Cys215, which acts as the Phosphocysteine intermediate. Position 215 is a cysteine persulfide; alternate (Cys215). Cysteine sulfenic acid (-SOH); alternate is present on Cys215. Cys215 bears the Cysteine sulfinic acid (-SO2H); alternate mark. S-nitrosocysteine; in reversibly inhibited form is present on Cys215. Positions 215–216 form a cross-link, n,N-(cysteine-1,S-diyl)serine (Cys-Ser); in inhibited form; it reads CS. 2 positions are modified to phosphoserine; by CLK1 and CLK2: Ser242 and Ser243. Substrate is bound at residue Gln262. Positions 338–351 are enriched in basic and acidic residues; that stretch reads TQEDKDCPIKEEKG. A disordered region spans residues 338-359; the sequence is TQEDKDCPIKEEKGSPLNAAPY. 3 positions are modified to phosphoserine: Ser352, Ser363, and Ser365. The residue at position 368 (Thr368) is a Phosphothreonine. Ser378 bears the Phosphoserine; by PKC mark. The interval 378–398 is disordered; that stretch reads SLRGAQAASPAKGEPSLPEKD. At Ser386 the chain carries Phosphoserine; by CDK1.

It belongs to the protein-tyrosine phosphatase family. Non-receptor class 1 subfamily. In terms of assembly, interacts with EPHA3 (phosphorylated); dephosphorylates EPHA3 and may regulate its trafficking and function. Interacts with MET. Interacts with NCK1. Post-translationally, oxidized on Cys-215; the Cys-SOH formed in response to redox signaling reacts with the alpha-amido of the following residue to form a sulfenamide cross-link, triggering a conformational change that inhibits substrate binding and activity. The active site can be restored by reduction. In terms of processing, ser-50 is the major site of phosphorylation as compared to Ser-242 and Ser-243. Activated by phosphorylation at Ser-50. S-nitrosylation of Cys-215 inactivates the enzyme activity. Post-translationally, sulfhydration at Cys-215 following endoplasmic reticulum stress inactivates the enzyme activity, promoting EIF2AK3/PERK activity. As to expression, expressed in keratinocytes (at protein level).

The protein localises to the endoplasmic reticulum membrane. The catalysed reaction is O-phospho-L-tyrosyl-[protein] + H2O = L-tyrosyl-[protein] + phosphate. In terms of biological role, tyrosine-protein phosphatase which acts as a regulator of endoplasmic reticulum unfolded protein response. Mediates dephosphorylation of EIF2AK3/PERK; inactivating the protein kinase activity of EIF2AK3/PERK. May play an important role in CKII- and p60c-src-induced signal transduction cascades. May regulate the EFNA5-EPHA3 signaling pathway which modulates cell reorganization and cell-cell repulsion. May also regulate the hepatocyte growth factor receptor signaling pathway through dephosphorylation of MET. In Homo sapiens (Human), this protein is Tyrosine-protein phosphatase non-receptor type 1 (PTPN1).